The following is a 130-amino-acid chain: P antigen family member 5 (130 aa).

Disordered regions lie at residues methionine 1 to glutamate 88 and aspartate 101 to leucine 130. Over residues threonine 14–threonine 26 the composition is skewed to basic and acidic residues. Over residues arginine 27–proline 42 the composition is skewed to polar residues. Threonine 113 and threonine 116 each carry phosphothreonine.

The protein belongs to the GAGE family.

The polypeptide is P antigen family member 5 (PAGE5) (Homo sapiens (Human)).